Reading from the N-terminus, the 271-residue chain is Putative carboxymethylenebutenolidase (271 aa).

Active-site residues include C147, D204, and H236.

The protein belongs to the dienelactone hydrolase family.

The catalysed reaction is 2-(5-oxo-2,5-dihydrofuran-2-ylidene)acetate + H2O = 4-oxohex-2-enedioate + H(+). The chain is Putative carboxymethylenebutenolidase (ysgA) from Escherichia coli O157:H7.